We begin with the raw amino-acid sequence, 235 residues long: Vacuolar protein sorting-associated protein 60.1 (235 aa).

Positions 1–29 (MRRVFGAKKNTEPPPSIQDASDRINKRGD) are disordered. A compositionally biased stretch (basic and acidic residues) spans 20 to 29 (ASDRINKRGD). The stretch at 99–148 (LKDAQQTMTALKSANKELKGMMKTVKIQDIDNLQDEMMDLMDVSSEIQES) forms a coiled coil. The interval 175 to 235 (MGNETEADGM…PAVPRASLRG (61 aa)) is disordered.

Belongs to the SNF7 family. As to quaternary structure, interacts with SKD1/VPS4 and LIP5. Interacts with VPS2.2.

It is found in the endosome. It localises to the multivesicular body membrane. Probable peripherally associated component of the endosomal sorting required for transport complex III (ESCRT-III) which is involved in multivesicular bodies (MVBs) formation and sorting of endosomal cargo proteins into MVBs. The chain is Vacuolar protein sorting-associated protein 60.1 from Arabidopsis thaliana (Mouse-ear cress).